The following is a 209-amino-acid chain: N-(5'-phosphoribosyl)anthranilate isomerase (209 aa).

The protein belongs to the TrpF family.

The enzyme catalyses N-(5-phospho-beta-D-ribosyl)anthranilate = 1-(2-carboxyphenylamino)-1-deoxy-D-ribulose 5-phosphate. The protein operates within amino-acid biosynthesis; L-tryptophan biosynthesis; L-tryptophan from chorismate: step 3/5. In Staphylococcus carnosus (strain TM300), this protein is N-(5'-phosphoribosyl)anthranilate isomerase.